The primary structure comprises 2000 residues: E3 ubiquitin-protein ligase TTC3 (2000 aa).

The segment at 20–249 (MDDFAEGGLS…RHSCMQCVKQ (230 aa)) is interaction with POLG. 2 TPR repeats span residues 250–283 (GELM…RPEN) and 284–317 (HLLY…KNTW). A Phosphoserine modification is found at Ser397. The segment at 442-478 (CDCHPEFLPPPSQPPRHKGKQKSRNNESEKPSSNSQV) is disordered. TPR repeat units lie at residues 556–592 (VLVV…YPNE) and 596–629 (CLAY…ICRL). The segment at 804 to 828 (AQERMEEDLRESNPPKPEEPEETVE) is disordered. The residue at position 1029 (Ser1029) is a Phosphoserine. Disordered regions lie at residues 1041–1087 (NKGK…GPFA), 1233–1308 (FQPD…PEDA), 1423–1448 (QSST…SSDS), 1806–1839 (LEVK…QSQK), and 1894–1947 (EEQK…VPAP). A compositionally biased stretch (polar residues) spans 1059 to 1070 (GTASVTPSSETV). Phosphoserine is present on Ser1080. Low complexity predominate over residues 1268-1277 (DSDSSSGSAS). Residues 1829-1839 (GQATRSSQSQK) show a composition bias toward polar residues. Over residues 1894 to 1911 (EEQKKKKPNPGKDKKTSE) the composition is skewed to basic and acidic residues. Low complexity predominate over residues 1912–1934 (AHPAASVSKSSPSPPLAAAGPSA). An RING-type; atypical zinc finger spans residues 1952–1991 (CQICHEIFKSKNMRVLKCGHKFHKGCFKQWLKGQSTCPTC).

Interacts (when phosphorylated on Ser-397) with AKT1, AKT2 and AKT3 (when phosphorylated). Interacts with CIT. Interacts with POLG. Interacts with HSP70. Interacts with SMURF2. Phosphorylation on Ser-397 by Akt is required for ubiquitin ligase activity. In terms of processing, proteolytically cleaved into differently sized N- and C-terminal fragments.

It is found in the nucleus. The protein localises to the cytoplasm. The protein resides in the golgi apparatus. It catalyses the reaction S-ubiquitinyl-[E2 ubiquitin-conjugating enzyme]-L-cysteine + [acceptor protein]-L-lysine = [E2 ubiquitin-conjugating enzyme]-L-cysteine + N(6)-ubiquitinyl-[acceptor protein]-L-lysine.. Its pathway is protein modification; protein ubiquitination. Its function is as follows. E3 ubiquitin-protein ligase which catalyzes the formation of 'Lys-48'-polyubiquitin chains. Mediates the ubiquitination and subsequent degradation of phosphorylated Akt (AKT1, AKT2 and AKT3) in the nucleus. Acts as a terminal regulator of Akt signaling after activation; its phosphorylation by Akt, which is a prerequisite for ubiquitin ligase activity, suggests the existence of a regulation mechanism required to control Akt levels after activation. Positively regulates TGFB1-induced epithelial-mesenchymal transition and myofibroblast differentiation by mediating the ubiquitination and subsequent degradation of SMURF2. Regulates neuronal differentiation by regulating actin remodeling and Golgi organization via a signaling cascade involving RHOA, CIT and ROCK. Inhibits cell proliferation. This chain is E3 ubiquitin-protein ligase TTC3, found in Rattus norvegicus (Rat).